The primary structure comprises 180 residues: Large ribosomal subunit protein uL5 (180 aa).

The protein belongs to the universal ribosomal protein uL5 family. Part of the 50S ribosomal subunit; part of the 5S rRNA/L5/L18/L25 subcomplex. Contacts the 5S rRNA and the P site tRNA. Forms a bridge to the 30S subunit in the 70S ribosome.

In terms of biological role, this is one of the proteins that bind and probably mediate the attachment of the 5S RNA into the large ribosomal subunit, where it forms part of the central protuberance. In the 70S ribosome it contacts protein S13 of the 30S subunit (bridge B1b), connecting the 2 subunits; this bridge is implicated in subunit movement. Contacts the P site tRNA; the 5S rRNA and some of its associated proteins might help stabilize positioning of ribosome-bound tRNAs. This chain is Large ribosomal subunit protein uL5, found in Clostridium botulinum (strain Loch Maree / Type A3).